We begin with the raw amino-acid sequence, 223 residues long: Probable transaldolase (223 aa).

The active-site Schiff-base intermediate with substrate is K86.

It belongs to the transaldolase family. Type 3B subfamily.

Its subcellular location is the cytoplasm. The catalysed reaction is D-sedoheptulose 7-phosphate + D-glyceraldehyde 3-phosphate = D-erythrose 4-phosphate + beta-D-fructose 6-phosphate. It participates in carbohydrate degradation; pentose phosphate pathway; D-glyceraldehyde 3-phosphate and beta-D-fructose 6-phosphate from D-ribose 5-phosphate and D-xylulose 5-phosphate (non-oxidative stage): step 2/3. In terms of biological role, transaldolase is important for the balance of metabolites in the pentose-phosphate pathway. This Thermoplasma volcanium (strain ATCC 51530 / DSM 4299 / JCM 9571 / NBRC 15438 / GSS1) protein is Probable transaldolase (tal).